The chain runs to 317 residues: Pinoresinol reductase 2 (317 aa).

Residues threonine 18, serine 20, leucine 21, arginine 41, lysine 50, serine 90, glycine 91, arginine 95, asparagine 98, and serine 121 each contribute to the NADP(+) site. Methionine 125 serves as a coordination point for (-)-pinoresinol. 2 residues coordinate NADP(+): lysine 144 and phenylalanine 166. The Proton acceptor role is filled by lysine 144. Glycine 178 provides a ligand contact to (-)-pinoresinol.

This sequence belongs to the NmrA-type oxidoreductase family. Isoflavone reductase subfamily. As to quaternary structure, forms homodimers. Expressed in roots. Detected in stems.

The catalysed reaction is (-)-lariciresinol + NADP(+) = (-)-pinoresinol + NADPH + H(+). Functionally, reductase involved in lignan biosynthesis. Unlike conventional pinoresinol reductases that can reduce both pinoresinol and lariciresinol, PRR2 shows a strict substrate selectivity for (-)-pinoresinol. No activity with (+)-pinoresinol or lariciresinol. Abstracts the 4R-hydride from the NADPH cofactor during catalysis. In Arabidopsis thaliana (Mouse-ear cress), this protein is Pinoresinol reductase 2.